The sequence spans 610 residues: Dapper homolog 3 (610 aa).

A Phosphoserine modification is found at Ser6. 3 disordered regions span residues 50-76 (PGMG…RRAA), 102-179 (LESG…SVGA), and 200-579 (TCSS…PAGP). Over residues 56 to 69 (EAEDEEDAEEDEDA) the composition is skewed to acidic residues. Positions 63 to 87 (AEEDEDAAAARRAAAALEEQLEALP) form a coiled coil. A compositionally biased stretch (low complexity) spans 120–138 (DPSSTGGPDSPPSTFCGDS). Phosphoserine occurs at positions 165 and 237. Residue Arg255 is modified to Omega-N-methylarginine. Over residues 317–331 (PPEPAPPAAASPPSS) the composition is skewed to pro residues. Residues 344–356 (PGAPAASRGLPGR) show a composition bias toward low complexity. Phosphoserine occurs at positions 409 and 456. Over residues 475–485 (PRGPAPSPSAP) the composition is skewed to pro residues. The span at 524–545 (ESESSASEGESPAFSSASSDSD) shows a compositional bias: low complexity. Residues 566–576 (GPGGAAGGGTP) are compositionally biased toward gly residues. A PDZ-binding motif is present at residues 607–610 (MTTV).

Belongs to the dapper family. Can form homodimers and heterodimers with DACT1 or DACT3. Interacts with CSNK1D, PKA catalytic subunit, PKC-type kinase, DVL1, DVL2, DVL3, VANGL1, VANGL2 and CTNND1. In terms of tissue distribution, expressed in brain and uterus.

In terms of biological role, may be involved in regulation of intracellular signaling pathways during development. Specifically thought to play a role in canonical and/or non-canonical Wnt signaling pathways through interaction with DSH (Dishevelled) family proteins. The sequence is that of Dapper homolog 3 (Dact3) from Mus musculus (Mouse).